Here is a 206-residue protein sequence, read N- to C-terminus: Triosephosphate isomerase (206 aa).

Residue His-76 is the Electrophile of the active site. The Proton acceptor role is filled by Glu-146.

Belongs to the triosephosphate isomerase family. Homodimer.

It catalyses the reaction D-glyceraldehyde 3-phosphate = dihydroxyacetone phosphate. The protein operates within carbohydrate biosynthesis; gluconeogenesis. Its pathway is carbohydrate degradation; glycolysis; D-glyceraldehyde 3-phosphate from glycerone phosphate: step 1/1. In Anopheles merus (Mosquito), this protein is Triosephosphate isomerase (Tpi).